Here is a 614-residue protein sequence, read N- to C-terminus: Probable LRR receptor-like serine/threonine-protein kinase At5g63710 (614 aa).

The first 50 residues, 1–50 (MAHSGNGESFHDPLRGFIQRNCFRWNNQKLILQCFMALAFVGITSSTTQP), serve as a signal peptide directing secretion. Over 51 to 224 (DIEGGALLQL…VTSSKKKLRD (174 aa)) the chain is Extracellular. Asparagine 65, asparagine 125, asparagine 146, and asparagine 175 each carry an N-linked (GlcNAc...) asparagine glycan. 3 LRR repeats span residues 115–139 (LKFL…LGNM), 141–163 (NLQT…WSQL), and 164–187 (SNLK…FFSI). A helical membrane pass occupies residues 225–245 (ITLTASCVASIILFLGAMVMY). Residues 246–613 (HHHRVRRTKY…DQESIRLSTA (368 aa)) lie on the Cytoplasmic side of the membrane. Threonine 286 is subject to Phosphothreonine. Positions 289 to 573 (FNESNLIGQG…GTGGLAEKWT (285 aa)) constitute a Protein kinase domain. 295–303 (IGQGGFGKV) lines the ATP pocket. A Phosphothreonine modification is found at threonine 312. An ATP-binding site is contributed by lysine 317. Serine 370 bears the Phosphoserine mark. Threonine 389 bears the Phosphothreonine mark. Aspartate 416 (proton acceptor) is an active-site residue. 3 positions are modified to phosphothreonine: threonine 449, threonine 450, and threonine 455. Tyrosine 463 bears the Phosphotyrosine mark. Residue threonine 466 is modified to Phosphothreonine. Residue serine 470 is modified to Phosphoserine. Threonine 545 carries the phosphothreonine modification.

Belongs to the protein kinase superfamily. Ser/Thr protein kinase family.

It localises to the cell membrane. It catalyses the reaction L-seryl-[protein] + ATP = O-phospho-L-seryl-[protein] + ADP + H(+). The enzyme catalyses L-threonyl-[protein] + ATP = O-phospho-L-threonyl-[protein] + ADP + H(+). This is Probable LRR receptor-like serine/threonine-protein kinase At5g63710 from Arabidopsis thaliana (Mouse-ear cress).